A 312-amino-acid chain; its full sequence is Ribosomal RNA small subunit methyltransferase H (312 aa).

S-adenosyl-L-methionine-binding positions include 34–36, D54, L83, D99, and Q106; that span reads GGH.

The protein belongs to the methyltransferase superfamily. RsmH family.

Its subcellular location is the cytoplasm. It carries out the reaction cytidine(1402) in 16S rRNA + S-adenosyl-L-methionine = N(4)-methylcytidine(1402) in 16S rRNA + S-adenosyl-L-homocysteine + H(+). In terms of biological role, specifically methylates the N4 position of cytidine in position 1402 (C1402) of 16S rRNA. The sequence is that of Ribosomal RNA small subunit methyltransferase H from Rubrobacter xylanophilus (strain DSM 9941 / JCM 11954 / NBRC 16129 / PRD-1).